Here is a 273-residue protein sequence, read N- to C-terminus: Dermonecrotic toxin LapSicTox-alphaIB1c (273 aa).

Histidine 5 is a catalytic residue. 2 residues coordinate Mg(2+): glutamate 25 and aspartate 27. Residue histidine 41 is the Nucleophile of the active site. 2 cysteine pairs are disulfide-bonded: cysteine 45-cysteine 51 and cysteine 47-cysteine 190. Aspartate 85 is a Mg(2+) binding site. N-linked (GlcNAc...) asparagine glycosylation is present at asparagine 250.

It belongs to the arthropod phospholipase D family. Class II subfamily. Requires Mg(2+) as cofactor. Expressed by the venom gland.

The protein resides in the secreted. The enzyme catalyses an N-(acyl)-sphingosylphosphocholine = an N-(acyl)-sphingosyl-1,3-cyclic phosphate + choline. It catalyses the reaction an N-(acyl)-sphingosylphosphoethanolamine = an N-(acyl)-sphingosyl-1,3-cyclic phosphate + ethanolamine. The catalysed reaction is a 1-acyl-sn-glycero-3-phosphocholine = a 1-acyl-sn-glycero-2,3-cyclic phosphate + choline. It carries out the reaction a 1-acyl-sn-glycero-3-phosphoethanolamine = a 1-acyl-sn-glycero-2,3-cyclic phosphate + ethanolamine. In terms of biological role, dermonecrotic toxins cleave the phosphodiester linkage between the phosphate and headgroup of certain phospholipids (sphingolipid and lysolipid substrates), forming an alcohol (often choline) and a cyclic phosphate. This toxin acts on sphingomyelin (SM). It may also act on ceramide phosphoethanolamine (CPE), lysophosphatidylcholine (LPC) and lysophosphatidylethanolamine (LPE), but not on lysophosphatidylserine (LPS), and lysophosphatidylglycerol (LPG). It acts by transphosphatidylation, releasing exclusively cyclic phosphate products as second products. Induces dermonecrosis, hemolysis, increased vascular permeability, edema, inflammatory response, and platelet aggregation. This Loxosceles apachea (Apache recluse spider) protein is Dermonecrotic toxin LapSicTox-alphaIB1c.